The following is a 644-amino-acid chain: DNA mismatch repair protein MutL (644 aa).

The segment at 336–356 (KRNINPLNRDDKTKDKSEYQK) is disordered. The segment covering 343–356 (NRDDKTKDKSEYQK) has biased composition (basic and acidic residues).

It belongs to the DNA mismatch repair MutL/HexB family.

Functionally, this protein is involved in the repair of mismatches in DNA. It is required for dam-dependent methyl-directed DNA mismatch repair. May act as a 'molecular matchmaker', a protein that promotes the formation of a stable complex between two or more DNA-binding proteins in an ATP-dependent manner without itself being part of a final effector complex. This is DNA mismatch repair protein MutL from Halothermothrix orenii (strain H 168 / OCM 544 / DSM 9562).